We begin with the raw amino-acid sequence, 338 residues long: DNA-directed RNA polymerase subunit alpha (338 aa).

An alpha N-terminal domain (alpha-NTD) region spans residues 1–234; sequence MIERNWNELI…DQLQIFITFE (234 aa). The tract at residues 250-338 is alpha C-terminal domain (alpha-CTD); sequence FNPALLKKVD…DLAKKFEDQI (89 aa).

It belongs to the RNA polymerase alpha chain family. Homodimer. The RNAP catalytic core consists of 2 alpha, 1 beta, 1 beta' and 1 omega subunit. When a sigma factor is associated with the core the holoenzyme is formed, which can initiate transcription.

The catalysed reaction is RNA(n) + a ribonucleoside 5'-triphosphate = RNA(n+1) + diphosphate. Its function is as follows. DNA-dependent RNA polymerase catalyzes the transcription of DNA into RNA using the four ribonucleoside triphosphates as substrates. The polypeptide is DNA-directed RNA polymerase subunit alpha (Caulobacter sp. (strain K31)).